A 181-amino-acid polypeptide reads, in one-letter code: MSLFRTIPTPGDFAPLFRLLDDYDNHRSARGHASVQSFAPRFDVRESNEAYHLDGELPGIPQSNIDIEFTDPQTLVIKGRSEREYHSSSDDNKNDQADTENQARGESSEVAKTGEKQVSTKKAANKSRYWVSERSVGEFQRTFTFPTRVNQDDVKASLKDGILSLVVPKAVPPTAKKITIQ.

In terms of domain architecture, sHSP spans 33 to 181 (ASVQSFAPRF…PPTAKKITIQ (149 aa)). A compositionally biased stretch (basic and acidic residues) spans 79–115 (GRSEREYHSSSDDNKNDQADTENQARGESSEVAKTGE). Positions 79–127 (GRSEREYHSSSDDNKNDQADTENQARGESSEVAKTGEKQVSTKKAANKS) are disordered.

The protein belongs to the small heat shock protein (HSP20) family.

This Emericella nidulans (strain FGSC A4 / ATCC 38163 / CBS 112.46 / NRRL 194 / M139) (Aspergillus nidulans) protein is 30 kDa heat shock protein (hsp30).